A 924-amino-acid polypeptide reads, in one-letter code: Mediator of RNA polymerase II transcription subunit 16 (924 aa).

The protein belongs to the Mediator complex subunit 16 family. Component of the Mediator complex.

Its subcellular location is the nucleus. In terms of biological role, component of the Mediator complex, a coactivator involved in the regulated transcription of nearly all RNA polymerase II-dependent genes. Mediator functions as a bridge to convey information from gene-specific regulatory proteins to the basal RNA polymerase II transcription machinery. Mediator is recruited to promoters by direct interactions with regulatory proteins and serves as a scaffold for the assembly of a functional preinitiation complex with RNA polymerase II and the general transcription factors. The sequence is that of Mediator of RNA polymerase II transcription subunit 16 (SIN4) from Yarrowia lipolytica (strain CLIB 122 / E 150) (Yeast).